The chain runs to 238 residues: HTH-type transcriptional regulator TreR (238 aa).

One can recognise an HTH gntR-type domain in the interval 1–71; that stretch reads MKVNKFITIY…RGKGSVVLNR (71 aa). The segment at residues 31-50 is a DNA-binding region (H-T-H motif); that stretch reads EHELTAQYGTSRETVRKALH.

Dimer of dimers.

Functionally, repressor for the trePA operon. It is able to bind trehalose-6-phosphate. This Bacillus subtilis (strain 168) protein is HTH-type transcriptional regulator TreR (treR).